The following is a 410-amino-acid chain: Ribosomal protein S6 kinase-related protein (410 aa).

The 168-residue stretch at 107–274 (LKILGLVAKG…GTLQYMAPEV (168 aa)) folds into the Protein kinase domain. ATP contacts are provided by residues 113–121 (VAKGSFGTV) and K136. Catalysis depends on D229, which acts as the Proton acceptor.

The protein belongs to the protein kinase superfamily. Ser/Thr protein kinase family.

The enzyme catalyses L-seryl-[protein] + ATP = O-phospho-L-seryl-[protein] + ADP + H(+). It carries out the reaction L-threonyl-[protein] + ATP = O-phospho-L-threonyl-[protein] + ADP + H(+). This Homo sapiens (Human) protein is Ribosomal protein S6 kinase-related protein.